The sequence spans 340 residues: Uridine nucleosidase (340 aa).

His254 is a catalytic residue.

This sequence belongs to the IUNH family.

The protein resides in the cytoplasm. It is found in the nucleus. The catalysed reaction is uridine + H2O = D-ribose + uracil. Functionally, also acts on cytidine. The protein is Uridine nucleosidase (URH1) of Saccharomyces cerevisiae (strain ATCC 204508 / S288c) (Baker's yeast).